Consider the following 231-residue polypeptide: Cytochrome c oxidase subunit 2 (231 aa).

Residues methionine 1–serine 14 lie on the Mitochondrial intermembrane side of the membrane. A helical transmembrane segment spans residues proline 15–methionine 45. Residues leucine 46–glutamine 59 are Mitochondrial matrix-facing. A helical transmembrane segment spans residues glutamate 60–threonine 87. The Mitochondrial intermembrane portion of the chain corresponds to aspartate 88–leucine 231. Residues histidine 161, cysteine 196, glutamate 198, cysteine 200, histidine 204, and methionine 207 each coordinate Cu cation. Glutamate 198 contacts Mg(2+).

It belongs to the cytochrome c oxidase subunit 2 family. Component of the cytochrome c oxidase (complex IV, CIV), a multisubunit enzyme composed of 14 subunits. The complex is composed of a catalytic core of 3 subunits MT-CO1, MT-CO2 and MT-CO3, encoded in the mitochondrial DNA, and 11 supernumerary subunits COX4I, COX5A, COX5B, COX6A, COX6B, COX6C, COX7A, COX7B, COX7C, COX8 and NDUFA4, which are encoded in the nuclear genome. The complex exists as a monomer or a dimer and forms supercomplexes (SCs) in the inner mitochondrial membrane with NADH-ubiquinone oxidoreductase (complex I, CI) and ubiquinol-cytochrome c oxidoreductase (cytochrome b-c1 complex, complex III, CIII), resulting in different assemblies (supercomplex SCI(1)III(2)IV(1) and megacomplex MCI(2)III(2)IV(2)). Found in a complex with TMEM177, COA6, COX18, COX20, SCO1 and SCO2. Interacts with TMEM177 in a COX20-dependent manner. Interacts with COX20. Interacts with COX16. Cu cation serves as cofactor.

It is found in the mitochondrion inner membrane. It carries out the reaction 4 Fe(II)-[cytochrome c] + O2 + 8 H(+)(in) = 4 Fe(III)-[cytochrome c] + 2 H2O + 4 H(+)(out). Functionally, component of the cytochrome c oxidase, the last enzyme in the mitochondrial electron transport chain which drives oxidative phosphorylation. The respiratory chain contains 3 multisubunit complexes succinate dehydrogenase (complex II, CII), ubiquinol-cytochrome c oxidoreductase (cytochrome b-c1 complex, complex III, CIII) and cytochrome c oxidase (complex IV, CIV), that cooperate to transfer electrons derived from NADH and succinate to molecular oxygen, creating an electrochemical gradient over the inner membrane that drives transmembrane transport and the ATP synthase. Cytochrome c oxidase is the component of the respiratory chain that catalyzes the reduction of oxygen to water. Electrons originating from reduced cytochrome c in the intermembrane space (IMS) are transferred via the dinuclear copper A center (CU(A)) of subunit 2 and heme A of subunit 1 to the active site in subunit 1, a binuclear center (BNC) formed by heme A3 and copper B (CU(B)). The BNC reduces molecular oxygen to 2 water molecules using 4 electrons from cytochrome c in the IMS and 4 protons from the mitochondrial matrix. The sequence is that of Cytochrome c oxidase subunit 2 (MT-CO2) from Brachyteles hypoxanthus (Northern muriqui).